The following is a 431-amino-acid chain: MANSC domain-containing protein 1 (431 aa).

Residues 1–26 (MFFGGKGSLTYTLVIICFLTLRLAAS) form the signal peptide. The Extracellular portion of the chain corresponds to 27–385 (QNCLNKSLED…QYGLPFEKWL (359 aa)). Asn31 carries an N-linked (GlcNAc...) asparagine glycan. In terms of domain architecture, MANSC spans 33–117 (SLEDVVIDIQ…LKPAKGLRSY (85 aa)). N-linked (GlcNAc...) asparagine glycosylation is found at Asn222 and Asn251. The segment at 236–279 (HTTSATPKPAIRLPTNASVTPSGTSQPQLATTSPPVTTVTSQPP) is disordered. Residues 250–265 (TNASVTPSGTSQPQLA) show a composition bias toward polar residues. Residues 266–279 (TTSPPVTTVTSQPP) are compositionally biased toward low complexity. 2 N-linked (GlcNAc...) asparagine glycosylation sites follow: Asn327 and Asn352. Positions 352-372 (NKTASWEGREASPGRSSQGNV) are disordered. The helical transmembrane segment at 386-408 (LIGSLLFGVLFLVIGLVLLGRIL) threads the bilayer. Residues 409 to 431 (SESLRRKRYSRLDYLINGIYVDI) are Cytoplasmic-facing.

It is found in the membrane. The chain is MANSC domain-containing protein 1 (MANSC1) from Macaca fascicularis (Crab-eating macaque).